Here is a 378-residue protein sequence, read N- to C-terminus: MHFPGHSSKKEESAQAALTKLNSWFPTTKNPVIISAPMYLIANGTLAAEVSKAGGIGFVAGGSDFRPGSSHLTALSTELASARSRLGLTDRPLTPLPGIGVGLILTHTISVPYVTDTVLPILIEHSPQAVWLFANDPDFEASSEPGAKGTAKQIIEALHASGFVVFFQVGTVKDARKAAADGADVIVAQGIDAGGHQLATGSGIVSLVPEVRDMLDREFKEREVVVVAAGGVADGRGVVGALGLGAEGVVLGTRFTVAVEASTPEFRRKVILETNDGGLNTVKSHFHDQINCNTIWHNVYDGRAVRNASYDDHAAGVPFEENHKKFKEAASSGDNSRAVTWSGTAVGLIKDQRPAGDIVRELREEAKERIKKIQAFAA.

Positions 1–15 (MHFPGHSSKKEESAQ) are excised as a propeptide. FMN is bound at residue 37–39 (PMY). His-196 serves as the catalytic Proton acceptor. His-196 lines the substrate pocket. FMN is bound by residues 229–231 (AGG) and 252–253 (GT).

The protein belongs to the nitronate monooxygenase family. NMO class II subfamily. As to quaternary structure, homodimer. It depends on FMN as a cofactor.

It catalyses the reaction ethylnitronate + O2 = chemical entity + acetaldehyde + nitrite + H(+). In terms of biological role, catalyzes the oxidation of alkyl nitronates to produce the corresponding carbonyl compounds and nitrites. Anionic forms of nitroalkanes are much better substrates than are neutral forms. This chain is Nitronate monooxygenase (ncd-2), found in Neurospora crassa (strain ATCC 24698 / 74-OR23-1A / CBS 708.71 / DSM 1257 / FGSC 987).